A 461-amino-acid polypeptide reads, in one-letter code: Tip elongation protein 1 (461 aa).

Positions 22-69 (GEVENRKGVYVGLELLPEFAEFGKNRGVVDGREYFKTKNNEKTGIFVP) constitute a CAP-Gly domain. Residues Ser82, Ser84, Ser289, Ser294, and Ser305 each carry the phosphoserine modification. A coiled-coil region spans residues 134–418 (TEKILQKRIE…RMSPAEFELE (285 aa)). Over residues 278–303 (KANSSTANEKLSHMESSSPTLTNASF) the composition is skewed to polar residues. The interval 278–323 (KANSSTANEKLSHMESSSPTLTNASFESPKRGKGSNDLPENHPQRR) is disordered. Phosphothreonine is present on Thr367. A disordered region spans residues 417–437 (LETTQEVEENDSDSHDDEETW).

In terms of assembly, monomer. Interacts with tea1 and tea2. Interacts with tea4 in the presence of tea1.

The protein resides in the cytoplasm. Its subcellular location is the cytoskeleton. Its function is as follows. Has a role in stabilizing and targeting the growing tips of the microtubules along the long axis of the cell, directing them to the ends of the cell. Acts as a cargo for tea2. The sequence is that of Tip elongation protein 1 (tip1) from Schizosaccharomyces pombe (strain 972 / ATCC 24843) (Fission yeast).